Here is a 545-residue protein sequence, read N- to C-terminus: Alpha-galactosidase A (545 aa).

An N-terminal signal peptide occupies residues 1 to 31 (MIQGLESIMNQGTKRILLAATLAATPWQVYG). A disulfide bridge links Cys54 with Cys86. N-linked (GlcNAc...) asparagine glycosylation is found at Asn57, Asn95, Asn101, and Asn131. Cys134 and Cys164 are disulfide-bonded. The active-site Nucleophile is the Asp162. Asn211 is a glycosylation site (N-linked (GlcNAc...) asparagine). The active-site Proton donor is Asp220. Asn363 and Asn444 each carry an N-linked (GlcNAc...) asparagine glycan. One can recognise a Ricin B-type lectin domain in the interval 421–518 (CSSVVPTGLV…KNAKTDGCLT (98 aa)). Cystine bridges form between Cys438–Cys452 and Cys477–Cys490.

The protein belongs to the glycosyl hydrolase 27 family. Post-translationally, a C-terminal Ser/Thr-rich region may provide possible sites for O-glycosylation.

Its subcellular location is the secreted. The catalysed reaction is Hydrolysis of terminal, non-reducing alpha-D-galactose residues in alpha-D-galactosides, including galactose oligosaccharides, galactomannans and galactolipids.. Functionally, hydrolyzes a variety of simple alpha-D-galactoside as well as more complex molecules such as oligosaccharides and polysaccharides. This chain is Alpha-galactosidase A (aglA), found in Aspergillus niger.